A 237-amino-acid polypeptide reads, in one-letter code: B3 domain-containing protein At1g20600 (237 aa).

The interval 53–79 (LVSQANQKQSRKREEKTEKNQPKRVKN) is disordered. The span at 64 to 73 (KREEKTEKNQ) shows a compositional bias: basic and acidic residues. The segment at residues 126–230 (KKQLMSSDVD…LEHVFIRGSK (105 aa)) is a DNA-binding region (TF-B3).

It localises to the nucleus. The protein is B3 domain-containing protein At1g20600 of Arabidopsis thaliana (Mouse-ear cress).